Reading from the N-terminus, the 571-residue chain is Proline--tRNA ligase (571 aa).

This sequence belongs to the class-II aminoacyl-tRNA synthetase family. ProS type 1 subfamily. As to quaternary structure, homodimer.

It localises to the cytoplasm. It catalyses the reaction tRNA(Pro) + L-proline + ATP = L-prolyl-tRNA(Pro) + AMP + diphosphate. Functionally, catalyzes the attachment of proline to tRNA(Pro) in a two-step reaction: proline is first activated by ATP to form Pro-AMP and then transferred to the acceptor end of tRNA(Pro). As ProRS can inadvertently accommodate and process non-cognate amino acids such as alanine and cysteine, to avoid such errors it has two additional distinct editing activities against alanine. One activity is designated as 'pretransfer' editing and involves the tRNA(Pro)-independent hydrolysis of activated Ala-AMP. The other activity is designated 'posttransfer' editing and involves deacylation of mischarged Ala-tRNA(Pro). The misacylated Cys-tRNA(Pro) is not edited by ProRS. This is Proline--tRNA ligase from Shewanella baltica (strain OS185).